Reading from the N-terminus, the 573-residue chain is Probable CoA ligase CCL13 (573 aa).

ATP-binding positions include T216–K224, H352–T357, D449, L461–R464, and K556. The tract at residues S284–H352 is SBD1. Residues I353–Y429 form an SBD2 region.

The protein belongs to the ATP-dependent AMP-binding enzyme family.

Its subcellular location is the cytoplasm. The protein localises to the cytosol. The chain is Probable CoA ligase CCL13 from Humulus lupulus (European hop).